A 384-amino-acid chain; its full sequence is Epoxyqueuosine reductase (384 aa).

The Proton donor role is filled by Asp144. Positions 186-218 constitute a 4Fe-4S ferredoxin-type domain; that stretch reads LPLPVDQPVEEGCGKCVACMTICPTGAIVEPYT. Residues Cys198, Cys201, Cys204, Cys208, Cys224, Cys251, Cys254, and Cys258 each coordinate [4Fe-4S] cluster.

It belongs to the QueG family. In terms of assembly, monomer. Cob(II)alamin serves as cofactor. Requires [4Fe-4S] cluster as cofactor.

Its subcellular location is the cytoplasm. It catalyses the reaction epoxyqueuosine(34) in tRNA + AH2 = queuosine(34) in tRNA + A + H2O. The protein operates within tRNA modification; tRNA-queuosine biosynthesis. In terms of biological role, catalyzes the conversion of epoxyqueuosine (oQ) to queuosine (Q), which is a hypermodified base found in the wobble positions of tRNA(Asp), tRNA(Asn), tRNA(His) and tRNA(Tyr). This Salmonella typhimurium (strain LT2 / SGSC1412 / ATCC 700720) protein is Epoxyqueuosine reductase.